Here is a 119-residue protein sequence, read N- to C-terminus: Holo-[acyl-carrier-protein] synthase (119 aa).

The Mg(2+) site is built by Asp-8 and Glu-58.

Belongs to the P-Pant transferase superfamily. AcpS family. Requires Mg(2+) as cofactor.

Its subcellular location is the cytoplasm. The enzyme catalyses apo-[ACP] + CoA = holo-[ACP] + adenosine 3',5'-bisphosphate + H(+). In terms of biological role, transfers the 4'-phosphopantetheine moiety from coenzyme A to a Ser of acyl-carrier-protein. This Bacillus mycoides (strain KBAB4) (Bacillus weihenstephanensis) protein is Holo-[acyl-carrier-protein] synthase.